The primary structure comprises 126 residues: Large ribosomal subunit protein eL28 (126 aa).

Residue Ser-2 is modified to N-acetylserine.

The protein belongs to the eukaryotic ribosomal protein eL28 family.

In Caenorhabditis elegans, this protein is Large ribosomal subunit protein eL28 (rpl-28).